A 617-amino-acid polypeptide reads, in one-letter code: tRNA uridine 5-carboxymethylaminomethyl modification enzyme MnmG (617 aa).

FAD-binding positions include 9 to 14 (GAGHAG), V121, and T176. Residue 269-283 (GPRYCPSIEDKFVRF) participates in NAD(+) binding. Position 366 (Q366) interacts with FAD.

This sequence belongs to the MnmG family. As to quaternary structure, homodimer. Heterotetramer of two MnmE and two MnmG subunits. It depends on FAD as a cofactor.

It is found in the cytoplasm. Functionally, NAD-binding protein involved in the addition of a carboxymethylaminomethyl (cmnm) group at the wobble position (U34) of certain tRNAs, forming tRNA-cmnm(5)s(2)U34. This is tRNA uridine 5-carboxymethylaminomethyl modification enzyme MnmG from Acholeplasma laidlawii (strain PG-8A).